Consider the following 470-residue polypeptide: Homogentisate 1,2-dioxygenase (470 aa).

3 residues coordinate Fe cation: His-356, Glu-362, and His-392.

It belongs to the homogentisate dioxygenase family. Requires Fe cation as cofactor.

It catalyses the reaction homogentisate + O2 = 4-maleylacetoacetate + H(+). Its pathway is amino-acid degradation; L-phenylalanine degradation; acetoacetate and fumarate from L-phenylalanine: step 4/6. The polypeptide is Homogentisate 1,2-dioxygenase (HGO) (Oryza sativa subsp. japonica (Rice)).